The primary structure comprises 261 residues: Small ribosomal subunit protein eS1z (261 aa).

Basic residues predominate over residues 1-18; that stretch reads MAVGKNKRISKGKKGGKK. Residues 1–20 are disordered; that stretch reads MAVGKNKRISKGKKGGKKKA.

This sequence belongs to the eukaryotic ribosomal protein eS1 family. As to quaternary structure, component of the small ribosomal subunit. Mature ribosomes consist of a small (40S) and a large (60S) subunit. The 40S subunit contains about 33 different proteins and 1 molecule of RNA (18S). The 60S subunit contains about 49 different proteins and 3 molecules of RNA (25S, 5.8S and 5S).

Its subcellular location is the cytoplasm. The protein is Small ribosomal subunit protein eS1z of Vitis vinifera (Grape).